We begin with the raw amino-acid sequence, 334 residues long: Glycerol-3-phosphate dehydrogenase [NAD(P)+] (334 aa).

Positions 14, 15, 35, and 109 each coordinate NADPH. Sn-glycerol 3-phosphate contacts are provided by Lys109, Gly138, and Thr140. Ala142 serves as a coordination point for NADPH. Sn-glycerol 3-phosphate contacts are provided by Lys194, Asp247, Ser257, Arg258, and Asn259. The Proton acceptor role is filled by Lys194. Residue Arg258 participates in NADPH binding. The NADPH site is built by Val282 and Glu284.

This sequence belongs to the NAD-dependent glycerol-3-phosphate dehydrogenase family.

The protein resides in the cytoplasm. It carries out the reaction sn-glycerol 3-phosphate + NAD(+) = dihydroxyacetone phosphate + NADH + H(+). The enzyme catalyses sn-glycerol 3-phosphate + NADP(+) = dihydroxyacetone phosphate + NADPH + H(+). Its pathway is membrane lipid metabolism; glycerophospholipid metabolism. Its function is as follows. Catalyzes the reduction of the glycolytic intermediate dihydroxyacetone phosphate (DHAP) to sn-glycerol 3-phosphate (G3P), the key precursor for phospholipid synthesis. The sequence is that of Glycerol-3-phosphate dehydrogenase [NAD(P)+] from Aeromonas hydrophila subsp. hydrophila (strain ATCC 7966 / DSM 30187 / BCRC 13018 / CCUG 14551 / JCM 1027 / KCTC 2358 / NCIMB 9240 / NCTC 8049).